The primary structure comprises 686 residues: Secretin GspD 2 (686 aa).

The N-terminal stretch at 1-40 (MFWRDITLSVWRKKTTGLKTKKRLLPLVLAAALCSSPVWA) is a signal peptide. The tract at residues 41–140 (EEATFTANFK…VGEGSDNYAG (100 aa)) is N0, contacts GspC2. Residues 142 to 206 (EMVTKVVPVR…EVIQRVDHAG (65 aa)) form an N1 region. Positions 207 to 279 (NRTEEVIPLD…LIRRLDSEME (73 aa)) are N2. The tract at residues 282–357 (GNSQVFYLKY…SLQSVIEQLD (76 aa)) is N3. A secretin region spans residues 360-627 (RAQVHVEALI…VFIRPTILRD (268 aa)). Residues 414 to 433 (PQKGSTVISENGATTINPDT) are cap gate. The segment at 629-686 (MAADGVSQRKYNYMRAEQIYRDEQGLSLMPHTAQPVLPAQNQALPPEVRAFLNAGRTR) is s domain, contacts AspS2.

The protein belongs to the bacterial secretin family. GSP D subfamily. As to quaternary structure, forms a cylindrical channel with 15 subunits, each of which interacts with the surrounding pilotin AspS2 proteins (also called GspS-beta). Interacts with inner cell membrane protein GspC2 in the periplasm. Forms multimers in the outer membrane. The isolated N0 domain forms dimers that self-assemble into rings.

It localises to the cell outer membrane. Part of a type II secretion system (T2SS, formerly general secretion pathway, GSP) for the export of folded proteins across the outer membrane. This subunit forms the outer membrane channel. This chain is Secretin GspD 2 (gspD2), found in Escherichia coli O78:H11 (strain H10407 / ETEC).